A 1108-amino-acid polypeptide reads, in one-letter code: DNA-directed RNA polymerase subunit beta (1108 aa).

Positions 1081-1108 (SPRRTPARPTIDYSALDDTDDKEGATTF) are disordered.

It belongs to the RNA polymerase beta chain family. As to quaternary structure, in cyanobacteria the RNAP catalytic core is composed of 2 alpha, 1 beta, 1 beta', 1 gamma and 1 omega subunit. When a sigma factor is associated with the core the holoenzyme is formed, which can initiate transcription.

It carries out the reaction RNA(n) + a ribonucleoside 5'-triphosphate = RNA(n+1) + diphosphate. Its function is as follows. DNA-dependent RNA polymerase catalyzes the transcription of DNA into RNA using the four ribonucleoside triphosphates as substrates. This chain is DNA-directed RNA polymerase subunit beta, found in Thermosynechococcus vestitus (strain NIES-2133 / IAM M-273 / BP-1).